Consider the following 179-residue polypeptide: Large ribosomal subunit protein uL5 (179 aa).

The protein belongs to the universal ribosomal protein uL5 family. In terms of assembly, part of the 50S ribosomal subunit; part of the 5S rRNA/L5/L18/L25 subcomplex. Contacts the 5S rRNA and the P site tRNA. Forms a bridge to the 30S subunit in the 70S ribosome.

This is one of the proteins that bind and probably mediate the attachment of the 5S RNA into the large ribosomal subunit, where it forms part of the central protuberance. In the 70S ribosome it contacts protein S13 of the 30S subunit (bridge B1b), connecting the 2 subunits; this bridge is implicated in subunit movement. Contacts the P site tRNA; the 5S rRNA and some of its associated proteins might help stabilize positioning of ribosome-bound tRNAs. In Halorhodospira halophila (strain DSM 244 / SL1) (Ectothiorhodospira halophila (strain DSM 244 / SL1)), this protein is Large ribosomal subunit protein uL5.